The primary structure comprises 293 residues: 4-hydroxybenzoate octaprenyltransferase (293 aa).

Helical transmembrane passes span 41–61 (FAAA…LGVI), 98–118 (TEAK…DLLL), 122–142 (TFLL…MKRF), 145–165 (LPQV…YGAV), 167–187 (ESLP…TVAY), 218–238 (IIAL…WISQ), 241–261 (WGYF…CWLT), and 272–292 (AFLN…VGIY).

This sequence belongs to the UbiA prenyltransferase family. Mg(2+) is required as a cofactor.

Its subcellular location is the cell inner membrane. It catalyses the reaction all-trans-octaprenyl diphosphate + 4-hydroxybenzoate = 4-hydroxy-3-(all-trans-octaprenyl)benzoate + diphosphate. It participates in cofactor biosynthesis; ubiquinone biosynthesis. In terms of biological role, catalyzes the prenylation of para-hydroxybenzoate (PHB) with an all-trans polyprenyl group. Mediates the second step in the final reaction sequence of ubiquinone-8 (UQ-8) biosynthesis, which is the condensation of the polyisoprenoid side chain with PHB, generating the first membrane-bound Q intermediate 3-octaprenyl-4-hydroxybenzoate. The sequence is that of 4-hydroxybenzoate octaprenyltransferase from Actinobacillus pleuropneumoniae serotype 5b (strain L20).